Reading from the N-terminus, the 396-residue chain is NADH-quinone oxidoreductase subunit D 1 (396 aa).

Belongs to the complex I 49 kDa subunit family. NDH-1 is composed of 14 different subunits. Subunits NuoB, C, D, E, F, and G constitute the peripheral sector of the complex.

Its subcellular location is the cell inner membrane. It catalyses the reaction a quinone + NADH + 5 H(+)(in) = a quinol + NAD(+) + 4 H(+)(out). Functionally, NDH-1 shuttles electrons from NADH, via FMN and iron-sulfur (Fe-S) centers, to quinones in the respiratory chain. The immediate electron acceptor for the enzyme in this species is believed to be ubiquinone. Couples the redox reaction to proton translocation (for every two electrons transferred, four hydrogen ions are translocated across the cytoplasmic membrane), and thus conserves the redox energy in a proton gradient. The polypeptide is NADH-quinone oxidoreductase subunit D 1 (Rhizobium meliloti (strain 1021) (Ensifer meliloti)).